A 269-amino-acid chain; its full sequence is Regulatory protein RecX (269 aa).

This sequence belongs to the RecX family.

Its subcellular location is the cytoplasm. Its function is as follows. Modulates RecA activity. This Listeria monocytogenes serotype 4a (strain HCC23) protein is Regulatory protein RecX.